Here is a 155-residue protein sequence, read N- to C-terminus: Transcriptional repressor NrdR (155 aa).

A zinc finger lies at 3 to 34; that stretch reads CPYCQNADTRVVDSRLIGEGEQVRRRRQCPSC. The ATP-cone domain maps to 49 to 139; that stretch reads PRVVKSDGRR…VYRRFEDVGA (91 aa).

Belongs to the NrdR family. It depends on Zn(2+) as a cofactor.

In terms of biological role, negatively regulates transcription of bacterial ribonucleotide reductase nrd genes and operons by binding to NrdR-boxes. The polypeptide is Transcriptional repressor NrdR (Halorhodospira halophila (strain DSM 244 / SL1) (Ectothiorhodospira halophila (strain DSM 244 / SL1))).